A 673-amino-acid chain; its full sequence is Clotting factor G alpha subunit (673 aa).

An N-terminal signal peptide occupies residues 1–19; that stretch reads MLVLLCCVVLHVGVARICC. A GH16 domain is found at 27–257; it reads LVWSDEFTNG…YVRVYQDAST (231 aa). The active-site Nucleophile is the Glu-137. Glu-142 (proton donor) is an active-site residue. A glycan (N-linked (GlcNAc...) asparagine) is linked at Asn-186. A Ricin B-type lectin domain is found at 266 to 404; sequence LDGYYFVQNR…NQLSGQWKLI (139 aa). CBM6 domains are found at residues 411–533 and 549–671; these read KLIQ…IKIT and KLIQ…IRIT.

Belongs to the glycosyl hydrolase 16 family. Clotting factor G is a heterodimer composed of two non-covalently associated subunits, alpha and beta. In terms of processing, in presence of (1-&gt;3)-beta-glucan, proteolytically cleaved into a 55kDa and a 17kDa forms. In terms of tissue distribution, expressed in hemocytes (at protein level).

Component of the heterodimer clotting factor G which may play a role in defense mechanisms against fungi. Initiates a (1-&gt;3)-beta-glucan-sensing clotting pathway whereby the alpha subunit binds to glucans containing (1-&gt;3)-beta linkages, which are components of the fungal cell wall, and the beta subunit catalyzes the activation of proclotting enzyme. The chain is Clotting factor G alpha subunit from Tachypleus tridentatus (Japanese horseshoe crab).